The following is a 319-amino-acid chain: Pantothenate kinase (319 aa).

96–103 is a binding site for ATP; that stretch reads GSVAVGKS.

It belongs to the prokaryotic pantothenate kinase family.

Its subcellular location is the cytoplasm. The catalysed reaction is (R)-pantothenate + ATP = (R)-4'-phosphopantothenate + ADP + H(+). It participates in cofactor biosynthesis; coenzyme A biosynthesis; CoA from (R)-pantothenate: step 1/5. In Bacillus subtilis (strain 168), this protein is Pantothenate kinase (coaA).